Consider the following 219-residue polypeptide: 7-cyano-7-deazaguanine synthase (219 aa).

10–20 (FSGGQDSTTCL) provides a ligand contact to ATP. 4 residues coordinate Zn(2+): cysteine 188, cysteine 197, cysteine 200, and cysteine 203.

It belongs to the QueC family. As to quaternary structure, homodimer. It depends on Zn(2+) as a cofactor.

It carries out the reaction 7-carboxy-7-deazaguanine + NH4(+) + ATP = 7-cyano-7-deazaguanine + ADP + phosphate + H2O + H(+). It functions in the pathway purine metabolism; 7-cyano-7-deazaguanine biosynthesis. Its function is as follows. Catalyzes the ATP-dependent conversion of 7-carboxy-7-deazaguanine (CDG) to 7-cyano-7-deazaguanine (preQ(0)). In Clostridium botulinum (strain 657 / Type Ba4), this protein is 7-cyano-7-deazaguanine synthase.